The primary structure comprises 446 residues: MREIVHLQTGQCRNQIGAKFWEVVSDEHGIEPDGLYKGNNDLQLERISVYYNEVGANKYVPRAVLVDLEPGTMDSVRSGPLGSLFRPDNFVFGQSGGGNNWAKGHYTEGAELVDAVLDVVRKEAEGTDCLQGFQITHSLGGGTGAGMGTLLISKIREEYPDRMMCTYSVVPSPKVSDTVVEPYNATLSVHQLVENSDETFCIDNEALYDICFRTLKLTTPTYGDLNHLISIVMSGITTCLRFPGQLNSDLRKLAVNMVPFPRLHFFMPGVCPLTARGSQQYRAVTVPELTQQMFDAKNMMAASDPRHGRYLTVAAVFRGKVSMKEVEEQMQNVQNKNSAYFVEWIPNNVLTAQCDIPPRGCKMAVTFLGNSTAIQELFKRVNDQFAAMFKRKAFLHWYTQEGMDEMEFTEAESNMQDLVAEYQQYQDATADEEEGEYEEEPAEEEQ.

Residues Gln-11, Glu-69, Ser-138, Gly-142, Thr-143, Gly-144, Asn-204, and Asn-226 each contribute to the GTP site. Glu-69 contributes to the Mg(2+) binding site. Positions 423-446 are disordered; that stretch reads QQYQDATADEEEGEYEEEPAEEEQ. Over residues 429–446 the composition is skewed to acidic residues; it reads TADEEEGEYEEEPAEEEQ.

This sequence belongs to the tubulin family. As to quaternary structure, dimer of alpha and beta chains. A typical microtubule is a hollow water-filled tube with an outer diameter of 25 nm and an inner diameter of 15 nM. Alpha-beta heterodimers associate head-to-tail to form protofilaments running lengthwise along the microtubule wall with the beta-tubulin subunit facing the microtubule plus end conferring a structural polarity. Microtubules usually have 13 protofilaments but different protofilament numbers can be found in some organisms and specialized cells. Mg(2+) serves as cofactor.

The protein resides in the cytoplasm. It is found in the cytoskeleton. Functionally, tubulin is the major constituent of microtubules, a cylinder consisting of laterally associated linear protofilaments composed of alpha- and beta-tubulin heterodimers. Microtubules grow by the addition of GTP-tubulin dimers to the microtubule end, where a stabilizing cap forms. Below the cap, tubulin dimers are in GDP-bound state, owing to GTPase activity of alpha-tubulin. The polypeptide is Tubulin beta chain (Pleurotus sajor-caju (Oyster mushroom)).